Consider the following 347-residue polypeptide: Ubiquinone biosynthesis protein coq-4, mitochondrial (347 aa).

Residues Met-1 to Phe-49 constitute a mitochondrion transit peptide. 4 residues coordinate Zn(2+): His-185, Asp-186, His-189, and Glu-201. The disordered stretch occupies residues Ile-284–Val-310.

It belongs to the COQ4 family. In terms of assembly, component of a multi-subunit COQ enzyme complex, composed of at least coq-3, coq-4, coq-5, coq-6, coq-7 and coq-9. Zn(2+) serves as cofactor.

It is found in the mitochondrion inner membrane. The catalysed reaction is a 4-hydroxy-3-methoxy-5-(all-trans-polyprenyl)benzoate + H(+) = a 2-methoxy-6-(all-trans-polyprenyl)phenol + CO2. The protein operates within cofactor biosynthesis; ubiquinone biosynthesis. Functionally, lyase that catalyzes the C1-decarboxylation of 4-hydroxy-3-methoxy-5-(all-trans-polyprenyl)benzoic acid into 2-methoxy-6-(all-trans-polyprenyl)phenol during ubiquinone biosynthesis. The chain is Ubiquinone biosynthesis protein coq-4, mitochondrial from Neurospora crassa (strain ATCC 24698 / 74-OR23-1A / CBS 708.71 / DSM 1257 / FGSC 987).